The following is a 1004-amino-acid chain: DNA-directed RNA polymerase subunit beta' (1004 aa).

Positions 388, 390, and 392 each coordinate Mg(2+). The Zn(2+) site is built by Cys-757, Cys-831, Cys-838, and Cys-841.

Belongs to the RNA polymerase beta' chain family. As to quaternary structure, the RNAP catalytic core consists of 2 alpha, 1 beta, 1 beta' and 1 omega subunit. When a sigma factor is associated with the core the holoenzyme is formed, which can initiate transcription. The cofactor is Mg(2+). Zn(2+) serves as cofactor.

It carries out the reaction RNA(n) + a ribonucleoside 5'-triphosphate = RNA(n+1) + diphosphate. Functionally, DNA-dependent RNA polymerase catalyzes the transcription of DNA into RNA using the four ribonucleoside triphosphates as substrates. The sequence is that of DNA-directed RNA polymerase subunit beta' from Oenococcus oeni (Leuconostoc oenos).